Reading from the N-terminus, the 386-residue chain is Small ribosomal subunit protein mS31 (386 aa).

Belongs to the mitochondrion-specific ribosomal protein mS31 family. In terms of assembly, component of the mitochondrial ribosome small subunit (28S) which comprises a 12S rRNA and about 30 distinct proteins.

It is found in the mitochondrion. The polypeptide is Small ribosomal subunit protein mS31 (MRPS31) (Bos taurus (Bovine)).